Here is a 257-residue protein sequence, read N- to C-terminus: Acetylglutamate kinase (257 aa).

Residues 40-41 (GG), R62, and N155 contribute to the substrate site.

The protein belongs to the acetylglutamate kinase family. ArgB subfamily.

Its subcellular location is the cytoplasm. It carries out the reaction N-acetyl-L-glutamate + ATP = N-acetyl-L-glutamyl 5-phosphate + ADP. The protein operates within amino-acid biosynthesis; L-arginine biosynthesis; N(2)-acetyl-L-ornithine from L-glutamate: step 2/4. Functionally, catalyzes the ATP-dependent phosphorylation of N-acetyl-L-glutamate. This is Acetylglutamate kinase from Shouchella clausii (strain KSM-K16) (Alkalihalobacillus clausii).